Consider the following 163-residue polypeptide: N5-carboxyaminoimidazole ribonucleotide mutase (163 aa).

Substrate contacts are provided by Ser11, Asp14, and Arg41.

This sequence belongs to the AIR carboxylase family. Class I subfamily.

The catalysed reaction is 5-carboxyamino-1-(5-phospho-D-ribosyl)imidazole + H(+) = 5-amino-1-(5-phospho-D-ribosyl)imidazole-4-carboxylate. It functions in the pathway purine metabolism; IMP biosynthesis via de novo pathway; 5-amino-1-(5-phospho-D-ribosyl)imidazole-4-carboxylate from 5-amino-1-(5-phospho-D-ribosyl)imidazole (N5-CAIR route): step 2/2. Functionally, catalyzes the conversion of N5-carboxyaminoimidazole ribonucleotide (N5-CAIR) to 4-carboxy-5-aminoimidazole ribonucleotide (CAIR). This Pseudomonas aeruginosa (strain ATCC 15692 / DSM 22644 / CIP 104116 / JCM 14847 / LMG 12228 / 1C / PRS 101 / PAO1) protein is N5-carboxyaminoimidazole ribonucleotide mutase.